A 253-amino-acid polypeptide reads, in one-letter code: Claudin domain-containing protein 1 (253 aa).

Residues 5–25 (FATAFVIACVLSLISTIYMAA) traverse the membrane as a helical segment. N42 and N72 each carry an N-linked (GlcNAc...) asparagine glycan. Helical transmembrane passes span 141–161 (FLLPFVSLGLMCFGALIGLCA), 175–195 (ILHLLAGLCTLGSVSCYVAGI), and 216–236 (FCLACVSAPLQFMASALFIWA).

The protein belongs to the PMP-22/EMP/MP20 family.

The protein localises to the cell junction. It is found in the tight junction. The protein resides in the cell membrane. Functionally, plays a role in negatively regulating the permeability of cells to small molecules. The chain is Claudin domain-containing protein 1 (CLDND1) from Macaca fascicularis (Crab-eating macaque).